Reading from the N-terminus, the 159-residue chain is Protein B1 (159 aa).

Over residues 1–15 the composition is skewed to basic residues; sequence MQKNMKTKKTKKRGR. Disordered stretches follow at residues 1 to 100 and 133 to 159; these read MQKN…RTRE and PGHGPHASLRSHLRARSALRPPPDPPR. Residues 16–31 are compositionally biased toward basic and acidic residues; it reads KEGNTPETERRMEPAR. Residues 85–96 are compositionally biased toward basic residues; sequence RGRHIHTRGART.

In Human herpesvirus 6B (strain Z29) (HHV-6 variant B), this protein is Protein B1 (B1).